Here is a 472-residue protein sequence, read N- to C-terminus: 3-isopropylmalate dehydratase large subunit (472 aa).

3 residues coordinate [4Fe-4S] cluster: C352, C413, and C416.

This sequence belongs to the aconitase/IPM isomerase family. LeuC type 1 subfamily. Heterodimer of LeuC and LeuD. The cofactor is [4Fe-4S] cluster.

The catalysed reaction is (2R,3S)-3-isopropylmalate = (2S)-2-isopropylmalate. It functions in the pathway amino-acid biosynthesis; L-leucine biosynthesis; L-leucine from 3-methyl-2-oxobutanoate: step 2/4. In terms of biological role, catalyzes the isomerization between 2-isopropylmalate and 3-isopropylmalate, via the formation of 2-isopropylmaleate. This is 3-isopropylmalate dehydratase large subunit from Pseudomonas fluorescens (strain ATCC BAA-477 / NRRL B-23932 / Pf-5).